We begin with the raw amino-acid sequence, 70 residues long: DNA-directed RNA polymerase subunit omega (70 aa).

This sequence belongs to the RNA polymerase subunit omega family. In terms of assembly, the RNAP catalytic core consists of 2 alpha, 1 beta, 1 beta' and 1 omega subunit. When a sigma factor is associated with the core the holoenzyme is formed, which can initiate transcription.

It carries out the reaction RNA(n) + a ribonucleoside 5'-triphosphate = RNA(n+1) + diphosphate. Its function is as follows. Promotes RNA polymerase assembly. Latches the N- and C-terminal regions of the beta' subunit thereby facilitating its interaction with the beta and alpha subunits. This Pelobacter propionicus (strain DSM 2379 / NBRC 103807 / OttBd1) protein is DNA-directed RNA polymerase subunit omega.